The chain runs to 211 residues: Protein TMA23 (211 aa).

Positions 115–211 (ASFVVSSASS…SARRDRKEHI (97 aa)) are disordered. Residues 116–125 (SFVVSSASSS) are compositionally biased toward low complexity. Basic residues-rich tracts occupy residues 140–149 (VKRKKLKKDK), 158–176 (KKKK…KKSK), and 185–197 (SKHK…KKHK). A compositionally biased stretch (basic and acidic residues) spans 198 to 211 (KEESSARRDRKEHI).

In terms of assembly, forms homooligomers. Associates with ribosomal complexes.

Its subcellular location is the nucleus. The protein resides in the nucleolus. In terms of biological role, trans-acting factors of the ribosome biogenesis process. The polypeptide is Protein TMA23 (TMA23) (Saccharomyces cerevisiae (strain ATCC 204508 / S288c) (Baker's yeast)).